The following is a 277-amino-acid chain: Co-chaperone protein DjlA (277 aa).

Topologically, residues 1–4 are periplasmic; sequence MWGK. A helical transmembrane segment spans residues 5-28; sequence ILGAFFGFLLGGPFGLLLGLFLGH. At 29-277 the chain is on the cytoplasmic side; the sequence is KFDKARRNVY…DMIRKEKGFK (249 aa). Positions 211–277 constitute a J domain; sequence DAYEVLGVTE…DMIRKEKGFK (67 aa).

In terms of assembly, homodimer.

The protein localises to the cell inner membrane. Functionally, regulatory DnaK co-chaperone. Direct interaction between DnaK and DjlA is needed for the induction of the wcaABCDE operon, involved in the synthesis of a colanic acid polysaccharide capsule, possibly through activation of the RcsB/RcsC phosphotransfer signaling pathway. The colanic acid capsule may help the bacterium survive conditions outside the host. This chain is Co-chaperone protein DjlA, found in Photobacterium profundum (strain SS9).